The chain runs to 235 residues: V-type proton ATPase subunit E2 (235 aa).

Methionine 1 carries the post-translational modification N-acetylmethionine. A coiled-coil region spans residues 8–64 (KQIQQMVRFIRQEAEEKANEISISAEEEFNIERLQLLESAKRKLRQDYDRKLKQVDI).

This sequence belongs to the V-ATPase E subunit family. In terms of assembly, V-ATPase is a heteromultimeric enzyme composed of a peripheral catalytic V1 complex (components A to H) attached to an integral membrane V0 proton pore complex (components: a, c, c'', d and e).

It is found in the vacuole membrane. In terms of biological role, subunit of the peripheral V1 complex of vacuolar ATPase essential for assembly or catalytic function. V-ATPase is responsible for acidifying a variety of intracellular compartments in eukaryotic cells. This is V-type proton ATPase subunit E2 (VHA-E2) from Arabidopsis thaliana (Mouse-ear cress).